The chain runs to 442 residues: Serine--tRNA ligase (442 aa).

244-246 is an L-serine binding site; sequence TAE. 275 to 277 lines the ATP pocket; that stretch reads RAE. L-serine is bound at residue glutamate 298. ATP is bound at residue 365-368; sequence EISS. Serine 400 provides a ligand contact to L-serine.

It belongs to the class-II aminoacyl-tRNA synthetase family. Type-1 seryl-tRNA synthetase subfamily. As to quaternary structure, homodimer. The tRNA molecule binds across the dimer.

The protein resides in the cytoplasm. The enzyme catalyses tRNA(Ser) + L-serine + ATP = L-seryl-tRNA(Ser) + AMP + diphosphate + H(+). The catalysed reaction is tRNA(Sec) + L-serine + ATP = L-seryl-tRNA(Sec) + AMP + diphosphate + H(+). Its pathway is aminoacyl-tRNA biosynthesis; selenocysteinyl-tRNA(Sec) biosynthesis; L-seryl-tRNA(Sec) from L-serine and tRNA(Sec): step 1/1. In terms of biological role, catalyzes the attachment of serine to tRNA(Ser). Is also able to aminoacylate tRNA(Sec) with serine, to form the misacylated tRNA L-seryl-tRNA(Sec), which will be further converted into selenocysteinyl-tRNA(Sec). The chain is Serine--tRNA ligase from Bradyrhizobium sp. (strain ORS 278).